A 162-amino-acid polypeptide reads, in one-letter code: NAD(P)H-quinone oxidoreductase subunit N (162 aa).

This sequence belongs to the complex I NdhN subunit family. In terms of assembly, NDH-1 can be composed of about 15 different subunits; different subcomplexes with different compositions have been identified which probably have different functions.

The protein localises to the cellular thylakoid membrane. The catalysed reaction is a plastoquinone + NADH + (n+1) H(+)(in) = a plastoquinol + NAD(+) + n H(+)(out). It catalyses the reaction a plastoquinone + NADPH + (n+1) H(+)(in) = a plastoquinol + NADP(+) + n H(+)(out). Its function is as follows. NDH-1 shuttles electrons from an unknown electron donor, via FMN and iron-sulfur (Fe-S) centers, to quinones in the respiratory and/or the photosynthetic chain. The immediate electron acceptor for the enzyme in this species is believed to be plastoquinone. Couples the redox reaction to proton translocation, and thus conserves the redox energy in a proton gradient. Cyanobacterial NDH-1 also plays a role in inorganic carbon-concentration. In Trichormus variabilis (strain ATCC 29413 / PCC 7937) (Anabaena variabilis), this protein is NAD(P)H-quinone oxidoreductase subunit N.